Here is a 325-residue protein sequence, read N- to C-terminus: Elongation factor P--(R)-beta-lysine ligase (325 aa).

76–78 (SPE) serves as a coordination point for substrate. Residues 100–102 (RNE) and N109 contribute to the ATP site. Y118 provides a ligand contact to substrate. Position 244 to 245 (244 to 245 (EL)) interacts with ATP. E251 serves as a coordination point for substrate. Residue G300 coordinates ATP.

Belongs to the class-II aminoacyl-tRNA synthetase family. EpmA subfamily. In terms of assembly, homodimer.

The catalysed reaction is D-beta-lysine + L-lysyl-[protein] + ATP = N(6)-((3R)-3,6-diaminohexanoyl)-L-lysyl-[protein] + AMP + diphosphate + H(+). Functionally, with EpmB is involved in the beta-lysylation step of the post-translational modification of translation elongation factor P (EF-P). Catalyzes the ATP-dependent activation of (R)-beta-lysine produced by EpmB, forming a lysyl-adenylate, from which the beta-lysyl moiety is then transferred to the epsilon-amino group of a conserved specific lysine residue in EF-P. The protein is Elongation factor P--(R)-beta-lysine ligase of Klebsiella pneumoniae (strain 342).